The following is a 785-amino-acid chain: E3 UFM1-protein ligase 1 homolog (785 aa).

The span at 396–416 shows a compositional bias: basic and acidic residues; sequence MKHQDVIPDKESAENKADKRD. A disordered region spans residues 396-473; that stretch reads MKHQDVIPDK…KSAGGKKGAK (78 aa). Over residues 439–449 the composition is skewed to basic residues; that stretch reads KSTKKHARGHR.

It belongs to the UFL1 family.

Functionally, E3 UFM1-protein ligase that mediates ufmylation of target proteins. The polypeptide is E3 UFM1-protein ligase 1 homolog (Culex quinquefasciatus (Southern house mosquito)).